Consider the following 24-residue polypeptide: Cryptonin (24 aa).

Functionally, antimicrobial peptide, active against the Gram-negative bacterium E.coli K12-594 (MIC=3.12 ug/ml), the Gram-positive bacteria B.subtilis KCTC 3086 (MIC=3.12 ug/ml), S.aureus KCTC 1928 (MIC=25 ug/ml) and M.luteus KCTC 3063 (MIC=1.56 ug/ml), the antibiotic resistant bacteria methicillin-resistant S.aureus (MRSA) (MIC=25 ug/ml) and vancomycin-resistant Enterococci (VRE) (MIC=25 ug/ml), and the fungi C.albicans KCTC 7965 (MIC=50 ug/ml) and C.tropicalis KCTC 1925 (MIC=3.12 ug/ml). Has very low hemolytic activity on rat erythrocytes. The sequence is that of Cryptonin from Cryptotympana dubia (Korean horse cicada).